A 142-amino-acid polypeptide reads, in one-letter code: Extracellular globin-1 (142 aa).

The 142-residue stretch at 1-142 folds into the Globin domain; that stretch reads ECLVTEGLKV…DQIIDGIKDI (142 aa). An intrachain disulfide couples Cys-2 to Cys-131. Position 94 (His-94) interacts with heme b.

The protein belongs to the globin family. In terms of assembly, the extracellular hemoglobin of the earthworm consists of 12 subunits that have a hexagonal bilayer structure with a molecular weight near 3.8 million. Each one-twelfth subunit is composed primarily of disulfide linked trimers (chains A, B, and C) and monomers (chain D).

The protein is Extracellular globin-1 of Lumbricus terrestris (Common earthworm).